A 685-amino-acid polypeptide reads, in one-letter code: UvrABC system protein B (685 aa).

The Helicase ATP-binding domain occupies 30-188 (DGVLRGDRWQ…QELVSLHYIR (159 aa)). 43–50 (GVTGSGKT) provides a ligand contact to ATP. Residues 96 to 119 (YYDFYQPEAYLPALDKYIAKDLRI) carry the Beta-hairpin motif. In terms of domain architecture, Helicase C-terminal spans 435-597 (QIDDLLAEIR…ITPRSIRKSL (163 aa)). One can recognise a UVR domain in the interval 641–676 (YAMVAELRLEMNEAAIQMEYEKAAYLRDEIARLMHG).

It belongs to the UvrB family. In terms of assembly, forms a heterotetramer with UvrA during the search for lesions. Interacts with UvrC in an incision complex.

The protein resides in the cytoplasm. Functionally, the UvrABC repair system catalyzes the recognition and processing of DNA lesions. A damage recognition complex composed of 2 UvrA and 2 UvrB subunits scans DNA for abnormalities. Upon binding of the UvrA(2)B(2) complex to a putative damaged site, the DNA wraps around one UvrB monomer. DNA wrap is dependent on ATP binding by UvrB and probably causes local melting of the DNA helix, facilitating insertion of UvrB beta-hairpin between the DNA strands. Then UvrB probes one DNA strand for the presence of a lesion. If a lesion is found the UvrA subunits dissociate and the UvrB-DNA preincision complex is formed. This complex is subsequently bound by UvrC and the second UvrB is released. If no lesion is found, the DNA wraps around the other UvrB subunit that will check the other stand for damage. This is UvrABC system protein B from Chlorobium phaeobacteroides (strain DSM 266 / SMG 266 / 2430).